Reading from the N-terminus, the 877-residue chain is ABC transporter A family member 1 (877 aa).

7 consecutive transmembrane segments (helical) span residues 46–66 (YFST…LFLI), 268–288 (VWGG…LLYK), 324–344 (ILIS…FFLG), 347–367 (FFVL…VAFF), 379–399 (IGIG…FSGM), 420–440 (IILF…IGNV), and 479–499 (LLAL…IIPG). The region spanning 552 to 788 (LIICGLSKSY…YGEGYSVNIV (237 aa)) is the ABC transporter domain. 591-598 (GSNGCGKS) serves as a coordination point for ATP.

Belongs to the ABC transporter superfamily. ABCA family.

Its subcellular location is the membrane. This is ABC transporter A family member 1 (abcA1) from Dictyostelium discoideum (Social amoeba).